The chain runs to 479 residues: UDP-N-acetylmuramate--L-alanine ligase (479 aa).

Position 128-134 (128-134 (GAHGKTT)) interacts with ATP.

It belongs to the MurCDEF family.

Its subcellular location is the cytoplasm. It carries out the reaction UDP-N-acetyl-alpha-D-muramate + L-alanine + ATP = UDP-N-acetyl-alpha-D-muramoyl-L-alanine + ADP + phosphate + H(+). The protein operates within cell wall biogenesis; peptidoglycan biosynthesis. Its function is as follows. Cell wall formation. In Psychrobacter arcticus (strain DSM 17307 / VKM B-2377 / 273-4), this protein is UDP-N-acetylmuramate--L-alanine ligase.